Reading from the N-terminus, the 340-residue chain is Phosphoribosylformylglycinamidine cyclo-ligase (340 aa).

It belongs to the AIR synthase family.

It is found in the cytoplasm. The catalysed reaction is 2-formamido-N(1)-(5-O-phospho-beta-D-ribosyl)acetamidine + ATP = 5-amino-1-(5-phospho-beta-D-ribosyl)imidazole + ADP + phosphate + H(+). It functions in the pathway purine metabolism; IMP biosynthesis via de novo pathway; 5-amino-1-(5-phospho-D-ribosyl)imidazole from N(2)-formyl-N(1)-(5-phospho-D-ribosyl)glycinamide: step 2/2. This Crocosphaera subtropica (strain ATCC 51142 / BH68) (Cyanothece sp. (strain ATCC 51142)) protein is Phosphoribosylformylglycinamidine cyclo-ligase.